The chain runs to 623 residues: MTIRSLPAALSPLSMAVQAVLLVSSLALAPAANAKPVTWEDIANDHLNTQNVLQYGMGTNAQRWSPLAMVNDKNVFKLTPAWSYSFGDERQRGQESQAIINDGVIYVTGSYSRVFALDAKTGRRLWTYNHRLPDNIRPCCDVVNRGAAIFGDKIYFGTLDARVIALNKDTGKVVWNKKFGDHSAGYTMTGAPTLIKDQKSGKVLLIHGSSGDEFGVVGQLYARDPETGEEVWMRPFVEGHMGRLNGKDSTPTGDVKAPSWPDDPTTETGKVESWSHGGGAPWQSASFDPETNTIIVGAGNPGPWNTWARTSKDGNPHDFDSLYTSGQVGVDPTTGEVKWFYQHTPNDAWDFSGNNELVLFDYKDKDGKQYKATAHADRNGFFYVVDRTNGKLKNAFPFVDNITWASHIDLKTGRPVENEGQRPAKPLPGETKGKPVEVSPPFLGGKNWNPMAYSQDTGLFYVPANHWKEEYWTEEVNYKKGSAYLGIGFRIKRMYEDHVGSLRAMDPTTGKVVWEHNERLPLWAGVLATKGNLVFTGTGDGYFKAFNAKTGEELWKFQTGSGIVSPPITWEQDGEQYIGVTVGYGGAVPLWGGDMAELTKPVAQGGSFWVFKIPAWDTKTAKR.

The signal sequence occupies residues 1-34 (MTIRSLPAALSPLSMAVQAVLLVSSLALAPAANA). Aspartate 45 and asparagine 51 together coordinate Ca(2+). Glutamate 95 provides a ligand contact to pyrroloquinoline quinone. Cysteine 139 and cysteine 140 form a disulfide bridge. Residues arginine 145, threonine 189, and 207–209 (HGS) contribute to the pyrroloquinoline quinone site. Residue glutamate 213 coordinates Ca(2+). The disordered stretch occupies residues 242-279 (GRLNGKDSTPTGDVKAPSWPDDPTTETGKVESWSHGGG). The Ca(2+) site is built by asparagine 300 and aspartate 350. Aspartate 350 (proton acceptor) is an active-site residue. Arginine 378 is a binding site for pyrroloquinoline quinone. The disordered stretch occupies residues 414 to 436 (RPVENEGQRPAKPLPGETKGKPV). WD repeat units follow at residues 515 to 556 (EHNE…ELWK) and 559 to 601 (TGSG…LTKP). Pyrroloquinoline quinone-binding residues include tryptophan 523 and alanine 587.

This sequence belongs to the bacterial PQQ dehydrogenase family. In terms of assembly, homodimer. It depends on pyrroloquinoline quinone as a cofactor. Ca(2+) is required as a cofactor.

The protein localises to the periplasm. It catalyses the reaction a primary alcohol + 2 Fe(III)-[cytochrome c] = an aldehyde + 2 Fe(II)-[cytochrome c] + 2 H(+). The catalysed reaction is ethanol + 2 Fe(III)-[cytochrome c] = acetaldehyde + 2 Fe(II)-[cytochrome c] + 2 H(+). The enzyme catalyses ethanol + A = acetaldehyde + AH2. It carries out the reaction 1-propanol + 2 Fe(III)-[cytochrome c] = propanal + 2 Fe(II)-[cytochrome c] + 2 H(+). It functions in the pathway alcohol metabolism; ethanol degradation; acetate from ethanol: step 1/2. With respect to regulation, enhanced by the presence of ethylamine or NH4(+) ions. Catalyzes the oxidation of ethanol and other primary alcohols to the corresponding aldehydes, except methanol, which is not a substrate. Uses a specific inducible cytochrome c550, encoded by the adjacent gene in the locus, as electron acceptor. Is a key enzyme of the carbon and energy metabolism during growth of P.putida on ethanol as the sole carbon and energy source. Displays lower activity on secondary alcohols, aldehydes and diols. Is not active with sugar alcohols such as glycerol and D-sorbitol. In vitro, reacts well with phenazine methosulfate (PMS) as an electron acceptor but not with NAD(P), potassium ferricyanide, or molecular oxygen. In Pseudomonas putida (Arthrobacter siderocapsulatus), this protein is Quinoprotein ethanol dehydrogenase.